The primary structure comprises 508 residues: ATP synthase subunit alpha (508 aa).

169-176 (GDRGTGKS) is a binding site for ATP.

It belongs to the ATPase alpha/beta chains family. F-type ATPases have 2 components, CF(1) - the catalytic core - and CF(0) - the membrane proton channel. CF(1) has five subunits: alpha(3), beta(3), gamma(1), delta(1), epsilon(1). CF(0) has three main subunits: a(1), b(2) and c(9-12). The alpha and beta chains form an alternating ring which encloses part of the gamma chain. CF(1) is attached to CF(0) by a central stalk formed by the gamma and epsilon chains, while a peripheral stalk is formed by the delta and b chains.

Its subcellular location is the cell membrane. It catalyses the reaction ATP + H2O + 4 H(+)(in) = ADP + phosphate + 5 H(+)(out). Functionally, produces ATP from ADP in the presence of a proton gradient across the membrane. The alpha chain is a regulatory subunit. The protein is ATP synthase subunit alpha of Natranaerobius thermophilus (strain ATCC BAA-1301 / DSM 18059 / JW/NM-WN-LF).